The primary structure comprises 74 residues: Cytochrome b (74 aa).

Residues 34 to 54 (FGSLLAICLVTQILTGLLLAM) form a helical membrane-spanning segment.

Belongs to the cytochrome b family. As to quaternary structure, the cytochrome bc1 complex contains 11 subunits: 3 respiratory subunits (MT-CYB, CYC1 and UQCRFS1), 2 core proteins (UQCRC1 and UQCRC2) and 6 low-molecular weight proteins (UQCRH/QCR6, UQCRB/QCR7, UQCRQ/QCR8, UQCR10/QCR9, UQCR11/QCR10 and a cleavage product of UQCRFS1). This cytochrome bc1 complex then forms a dimer. Requires heme as cofactor.

It localises to the mitochondrion inner membrane. Its function is as follows. Component of the ubiquinol-cytochrome c reductase complex (complex III or cytochrome b-c1 complex) that is part of the mitochondrial respiratory chain. The b-c1 complex mediates electron transfer from ubiquinol to cytochrome c. Contributes to the generation of a proton gradient across the mitochondrial membrane that is then used for ATP synthesis. The protein is Cytochrome b (MT-CYB) of Anser caerulescens (Snow goose).